Reading from the N-terminus, the 1326-residue chain is Probable serine/threonine-protein kinase gdt8 (1326 aa).

Residues 1-22 (MINKILIKLITIIIFCFSFLFA) form the signal peptide. Residues 23–782 (EEDLIRTPPG…VDRNENLELK (760 aa)) lie on the Extracellular side of the membrane. 2 disordered regions span residues 419 to 467 (VDQN…GNQG) and 731 to 762 (EPPTETPTETPTETPTETPTDTPTQTPTQTPI). Composition is skewed to low complexity over residues 422–460 (NNNNNNNNNNNNNNNNNNNNNNNNNNNNNNNNNNNNNNN) and 731–761 (EPPTETPTETPTETPTETPTDTPTQTPTQTP). The chain crosses the membrane as a helical span at residues 783–803 (IALPICLSLALLIGIIIMICI). Over 804–1326 (FKKVQSNSKL…TKEDKDLDEN (523 aa)) the chain is Cytoplasmic. The interval 833-858 (IVSQPPTVIEEKPQDNSKPDDQKLIE) is disordered. A compositionally biased stretch (basic and acidic residues) spans 841–858 (IEEKPQDNSKPDDQKLIE). The Protein kinase domain occupies 1036 to 1292 (IKTEQLIASY…FSEISLHLEI (257 aa)). Residues 1042-1050 (IASYLPSKV) and Lys1065 each bind ATP. Asp1158 acts as the Proton acceptor in catalysis. Residues 1301–1326 (MNESEESTSNHNTNSKTKEDKDLDEN) form a disordered region. A compositionally biased stretch (basic and acidic residues) spans 1316 to 1326 (KTKEDKDLDEN).

The protein in the N-terminal section; belongs to the GDT family. In the C-terminal section; belongs to the protein kinase superfamily. TKL Ser/Thr protein kinase family.

It is found in the membrane. The enzyme catalyses L-seryl-[protein] + ATP = O-phospho-L-seryl-[protein] + ADP + H(+). It catalyses the reaction L-threonyl-[protein] + ATP = O-phospho-L-threonyl-[protein] + ADP + H(+). In Dictyostelium discoideum (Social amoeba), this protein is Probable serine/threonine-protein kinase gdt8 (gdt8).